The following is a 367-amino-acid chain: Protein TlpB (367 aa).

Helical transmembrane passes span 15–35 (ILISFLFIISAIAKMYPSPYF), 53–73 (IIAPWFSRILIGIELALGILI), 83–103 (IIPITILLLAVFVGHLSYVTF), 124–144 (IQAIIKNIIAIFLLVYLFFLL), and 153–173 (FYVVIGITLATIISLFLLAPI).

It is found in the membrane. This Flavobacterium psychrophilum protein is Protein TlpB (tlpB).